The primary structure comprises 147 residues: ATP synthase epsilon chain (147 aa).

The protein belongs to the ATPase epsilon chain family. As to quaternary structure, F-type ATPases have 2 components, CF(1) - the catalytic core - and CF(0) - the membrane proton channel. CF(1) has five subunits: alpha(3), beta(3), gamma(1), delta(1), epsilon(1). CF(0) has three main subunits: a, b and c.

It is found in the cell inner membrane. Functionally, produces ATP from ADP in the presence of a proton gradient across the membrane. This Protochlamydia amoebophila (strain UWE25) protein is ATP synthase epsilon chain.